Consider the following 325-residue polypeptide: Tetraacyldisaccharide 4'-kinase (325 aa).

ATP is bound at residue T55 to T62.

The protein belongs to the LpxK family.

It carries out the reaction a lipid A disaccharide + ATP = a lipid IVA + ADP + H(+). The protein operates within glycolipid biosynthesis; lipid IV(A) biosynthesis; lipid IV(A) from (3R)-3-hydroxytetradecanoyl-[acyl-carrier-protein] and UDP-N-acetyl-alpha-D-glucosamine: step 6/6. In terms of biological role, transfers the gamma-phosphate of ATP to the 4'-position of a tetraacyldisaccharide 1-phosphate intermediate (termed DS-1-P) to form tetraacyldisaccharide 1,4'-bis-phosphate (lipid IVA). The polypeptide is Tetraacyldisaccharide 4'-kinase (Salmonella arizonae (strain ATCC BAA-731 / CDC346-86 / RSK2980)).